The primary structure comprises 524 residues: Unconventional prefoldin RPB5 interactor (524 aa).

Disordered regions lie at residues 1–20 (MEAPPDPRPHASAAAPLRAP), 284–320 (SVNGSSSYHSNEDDGDNNDDGGDSENDHDTLGVEDNS), and 335–373 (VRINTGKNTTLKFSEKKEEAKRKRKNSSGSGHSPQELPM). Acidic residues predominate over residues 296-307 (DDGDNNDDGGDS). Ser-361 is modified (phosphoserine; by RPS6KB1). Ser-431 carries the post-translational modification Phosphoserine.

Belongs to the RNA polymerase II subunit 5-mediating protein family. As to quaternary structure, homodimer. Component of the PAQosome complex which is responsible for the biogenesis of several protein complexes and which consists of R2TP complex members RUVBL1, RUVBL2, RPAP3 and PIH1D1, URI complex members PFDN2, PFDN6, PDRG1, UXT and URI1 as well as ASDURF, POLR2E and DNAAF10/WDR92. Interacts with POLR2E/RPB5, RUVBL2 and RUVBL1. Interacts with PFDN2, PFDN4 and STAP1; the interactions are phosphorylation-dependent and occur in a growth-dependent manner in the mitochondrion. Interacts with UXT. Interacts with PPP1CC; the interaction is phosphorylation-dependent and occurs in a growth factor-dependent manner. Interacts (via the middle C-terminal region) with GTF2F1 and GTF2F2. Interacts with DMAP1. Interacts with TSC1 and TSC2. Interacts with PRPF8 and EFTUD2 in a ZNHIT2-dependent manner. In terms of processing, phosphorylated. Phosphorylation occurs essentially on serine residues. Phosphorylation occurs in response to androgen treatment in prostate cancer cells in a mTOR-dependent manner. Phosphorylated; hyperhosphorylated in mitochondria in a mTORC-dependent signaling pathway. Phosphorylated at Ser-361 by RPS6KB1 in a growth factor- and rapamycin-dependent manner. S6K1-mediated mitochondrial phosphorylation at Ser-361 disrupts the URI1-PPP1CC complex in the mitochondrion, relieves PPP1CC phosphatase inhibition activity and hence engages a negative feedback diminishing RPS6KB1 kinase activity, preventing sustained S6K1-dependent signaling.

It is found in the nucleus. The protein localises to the cytoplasm. It localises to the mitochondrion. The protein resides in the cell projection. Its subcellular location is the dendrite. Involved in gene transcription regulation. Acts as a transcriptional repressor in concert with the corepressor UXT to regulate androgen receptor (AR) transcription. May act as a tumor suppressor to repress AR-mediated gene transcription and to inhibit anchorage-independent growth in prostate cancer cells. Required for cell survival in ovarian cancer cells. Together with UXT, associates with chromatin to the NKX3-1 promoter region. Its function is as follows. Plays a central role in maintaining S6K1 signaling and BAD phosphorylation under normal growth conditions thereby protecting cells from potential deleterious effects of sustained S6K1 signaling. The URI1-PPP1CC complex acts as a central component of a negative feedback mechanism that counteracts excessive S6K1 survival signaling to BAD in response to growth factors. Mediates inhibition of PPP1CC phosphatase activity in mitochondria. Coordinates the regulation of nutrient-sensitive gene expression availability in a mTOR-dependent manner. Seems to be a scaffolding protein able to assemble a prefoldin-like complex that contains PFDs and proteins with roles in transcription and ubiquitination. The chain is Unconventional prefoldin RPB5 interactor (URI1) from Bos taurus (Bovine).